The following is a 338-amino-acid chain: MPNMKTLGEFIVEKQNDFPHASGDLSSLLGSIKLAAKIVNREINKAGLVDITGAIGSENVQGEEQQKLDLYANDKFKAAMEARDQVCGVASEEEDEAVTFNKDLNRNAKYVILMDPLDGSSNIDVNVSVGTIFSIYRRVSPIGTTPTQDDFLQPGNQQVAAGYVIYGSSTMLVYTTGNGIHGFTYDPSLGVFCLSHENMQIPEDGQIYSINEGNYIRFPQGVKKYIKFCQEDVPADNRPYTSRYIGSLVSDFHRNLLKGGIYMYPSTAMYPNGKLRLLYECNPMAFLMEQAGGVASDGKNRILDITPTELHQRVPFFVGSTNMVKQVESFIEEYPEQH.

4 residues coordinate Mg(2+): E92, D115, L117, and D118. Residues D118–S121, N211, Y244, and K274 contribute to the substrate site. Mg(2+) is bound at residue E280.

Belongs to the FBPase class 1 family. Homotetramer. It depends on Mg(2+) as a cofactor.

It localises to the cytoplasm. The enzyme catalyses beta-D-fructose 1,6-bisphosphate + H2O = beta-D-fructose 6-phosphate + phosphate. It participates in carbohydrate biosynthesis; gluconeogenesis. This chain is Fructose-1,6-bisphosphatase class 1, found in Photobacterium profundum (strain SS9).